Here is a 61-residue protein sequence, read N- to C-terminus: Probable tautomerase SSP1389 (61 aa).

The active-site Proton acceptor; via imino nitrogen is the proline 2.

The protein belongs to the 4-oxalocrotonate tautomerase family.

The chain is Probable tautomerase SSP1389 from Staphylococcus saprophyticus subsp. saprophyticus (strain ATCC 15305 / DSM 20229 / NCIMB 8711 / NCTC 7292 / S-41).